Consider the following 72-residue polypeptide: Translation initiation factor IF-1 (72 aa).

Residues M1–R72 enclose the S1-like domain.

This sequence belongs to the IF-1 family. Component of the 30S ribosomal translation pre-initiation complex which assembles on the 30S ribosome in the order IF-2 and IF-3, IF-1 and N-formylmethionyl-tRNA(fMet); mRNA recruitment can occur at any time during PIC assembly.

The protein resides in the cytoplasm. Functionally, one of the essential components for the initiation of protein synthesis. Stabilizes the binding of IF-2 and IF-3 on the 30S subunit to which N-formylmethionyl-tRNA(fMet) subsequently binds. Helps modulate mRNA selection, yielding the 30S pre-initiation complex (PIC). Upon addition of the 50S ribosomal subunit IF-1, IF-2 and IF-3 are released leaving the mature 70S translation initiation complex. The sequence is that of Translation initiation factor IF-1 from Solibacter usitatus (strain Ellin6076).